We begin with the raw amino-acid sequence, 859 residues long: Probable helicase A859L (859 aa).

The Helicase ATP-binding domain maps to 178–349; sequence YQELQRSGRA…KNRDLFGGVA (172 aa). Position 191–198 (191–198) interacts with ATP; it reads MACRCGKT. Positions 298–301 match the DEAH box motif; the sequence is DECH. The 160-residue stretch at 394 to 553 folds into the Helicase C-terminal domain; sequence QIIMALAYLK…RFYEHLLNPS (160 aa).

The protein belongs to the asfivirus helicase A859L family.

This Ornithodoros (relapsing fever ticks) protein is Probable helicase A859L.